Here is a 192-residue protein sequence, read N- to C-terminus: Pterin-4-alpha-carbinolamine dehydratase (192 aa).

The protein belongs to the pterin-4-alpha-carbinolamine dehydratase family.

It carries out the reaction (4aS,6R)-4a-hydroxy-L-erythro-5,6,7,8-tetrahydrobiopterin = (6R)-L-erythro-6,7-dihydrobiopterin + H2O. This is Pterin-4-alpha-carbinolamine dehydratase (Pcd) from Drosophila melanogaster (Fruit fly).